The primary structure comprises 274 residues: Transcription factor Ovo-like 2 (274 aa).

A compositionally biased stretch (basic residues) spans 1–11 (MPKVFLVKRRS). The tract at residues 1 to 88 (MPKVFLVKRR…ETPELHDAQG (88 aa)) is disordered. Basic and acidic residues predominate over residues 18 to 29 (SWDELPDDKRAD). The span at 50–74 (DGGSSSGCSSSAGEPGGAESSSSPR) shows a compositional bias: low complexity. 4 consecutive C2H2-type zinc fingers follow at residues 118 to 140 (HNCDLCGKSFRLQRMLNRHLKCH), 146 to 168 (HLCTFCGKGFNDTFDLKRHVRTH), 174 to 197 (YKCEVCNKAFTQRCSLESHLKKIH), and 213 to 236 (YVCEDCGYTGPTQEDLYLHVNSDH). Residue Ser268 is modified to Phosphoserine.

The protein belongs to the krueppel C2H2-type zinc-finger protein family. As to quaternary structure, interacts (via zinc-finger domains) with CEBPA (via bZIP domain); the interaction inhibits the transcription factor activity of CEBPA and is required to repress adipogenesis. As to expression, expressed highly in testis, specifically in spermatocytes. Expressed also in skin and at lower levels in the ovary. Expressed in adipose tissues. Expression is lower than in testis and a relatively higher expression level is detected in the stromal vascular fraction (SVF) than in fat cells themselves.

Its subcellular location is the nucleus. Zinc-finger transcription repressor factor. Plays a critical role in maintaining the identity of epithelial lineages by suppressing epithelial-to mesenchymal transition (EMT) mainly through the repression of ZEB1, an EMT inducer. Positively regulates neuronal differentiation. Suppresses cell cycling and terminal differentiation of keratinocytes by directly repressing MYC and NOTCH1. Important for the correct development of primordial germ cells in embryos. Plays dual functions in thermogenesis and adipogenesis to maintain energy balance. Essential for brown/beige adipose tissue-mediated thermogenesis, is necessary for the development of brown adipocytes. In white adipose tissues, limits adipogenesis by blocking CEBPA binding to its transcriptional targets and inhibiting its transcription factor activity. This Mus musculus (Mouse) protein is Transcription factor Ovo-like 2.